The following is a 461-amino-acid chain: Carbamoyl phosphate synthase arginine-specific small chain (461 aa).

In terms of domain architecture, Glutamine amidotransferase type-1 spans 240–427; sequence HVALIDCGVK…LENVQMYKDN (188 aa). Cys316 serves as the catalytic Nucleophile. Catalysis depends on residues His400 and Glu402.

The protein belongs to the CarA family. In terms of assembly, heterodimer composed of 2 chains; the small (or glutamine) chain promotes the hydrolysis of glutamine to ammonia, which is used by the large (or ammonia) chain to synthesize carbamoyl phosphate.

It is found in the cytoplasm. The catalysed reaction is hydrogencarbonate + L-glutamine + 2 ATP + H2O = carbamoyl phosphate + L-glutamate + 2 ADP + phosphate + 2 H(+). It carries out the reaction L-glutamine + H2O = L-glutamate + NH4(+). It functions in the pathway amino-acid biosynthesis; L-arginine biosynthesis; carbamoyl phosphate from bicarbonate: step 1/1. In terms of biological role, small subunit of the arginine-specific carbamoyl phosphate synthase (CPSase). CPSase catalyzes the formation of carbamoyl phosphate from the ammonia moiety of glutamine, carbonate, and phosphate donated by ATP, constituting the first step of 2 biosynthetic pathways, one leading to arginine and/or urea and the other to pyrimidine nucleotides. The small subunit (glutamine amidotransferase) binds and cleaves glutamine to supply the large subunit with the substrate ammonia. The protein is Carbamoyl phosphate synthase arginine-specific small chain (CPA1) of Chaetomium globosum (strain ATCC 6205 / CBS 148.51 / DSM 1962 / NBRC 6347 / NRRL 1970) (Soil fungus).